We begin with the raw amino-acid sequence, 276 residues long: Transcriptional antiactivator ExsD (276 aa).

Can form homotrimer. Interacts with ExsA; this interaction inhibits ExsA activity. Interacts with ExsC; this interaction dissociates the ExsD-ExsA complex.

In terms of biological role, negative regulator of the type III secretion system regulon. Acts by disrupting transcriptional activator ExsA self-association and DNA-binding activity in absence of inducing signals. Upon host cell contact, this interaction is disrupted by the anti-antiactivator protein ExsC leading to ExsA activation. The protein is Transcriptional antiactivator ExsD (exsD) of Pseudomonas aeruginosa (strain ATCC 15692 / DSM 22644 / CIP 104116 / JCM 14847 / LMG 12228 / 1C / PRS 101 / PAO1).